A 556-amino-acid polypeptide reads, in one-letter code: 2-succinyl-5-enolpyruvyl-6-hydroxy-3-cyclohexene-1-carboxylate synthase (556 aa).

Belongs to the TPP enzyme family. MenD subfamily. In terms of assembly, homodimer. Requires Mg(2+) as cofactor. Mn(2+) serves as cofactor. The cofactor is thiamine diphosphate.

It carries out the reaction isochorismate + 2-oxoglutarate + H(+) = 5-enolpyruvoyl-6-hydroxy-2-succinyl-cyclohex-3-ene-1-carboxylate + CO2. It functions in the pathway quinol/quinone metabolism; 1,4-dihydroxy-2-naphthoate biosynthesis; 1,4-dihydroxy-2-naphthoate from chorismate: step 2/7. The protein operates within quinol/quinone metabolism; menaquinone biosynthesis. Its function is as follows. Catalyzes the thiamine diphosphate-dependent decarboxylation of 2-oxoglutarate and the subsequent addition of the resulting succinic semialdehyde-thiamine pyrophosphate anion to isochorismate to yield 2-succinyl-5-enolpyruvyl-6-hydroxy-3-cyclohexene-1-carboxylate (SEPHCHC). The polypeptide is 2-succinyl-5-enolpyruvyl-6-hydroxy-3-cyclohexene-1-carboxylate synthase (Escherichia coli O45:K1 (strain S88 / ExPEC)).